Reading from the N-terminus, the 179-residue chain is Large ribosomal subunit protein uL6 (179 aa).

This sequence belongs to the universal ribosomal protein uL6 family. In terms of assembly, part of the 50S ribosomal subunit.

Its function is as follows. This protein binds to the 23S rRNA, and is important in its secondary structure. It is located near the subunit interface in the base of the L7/L12 stalk, and near the tRNA binding site of the peptidyltransferase center. The polypeptide is Large ribosomal subunit protein uL6 (Pelodictyon phaeoclathratiforme (strain DSM 5477 / BU-1)).